Here is a 205-residue protein sequence, read N- to C-terminus: Polyamine-modulated factor 1 (205 aa).

Positions 1-30 are disordered; the sequence is MAEASSANLGSGCEEKRHEGSSSESVPPGT. The stretch at 141–193 forms a coiled coil; sequence FLQQRDTLRRHVQKQEAENQQLADAVLAGRRQVEELQLQVQAQQQAWQALHRE.

As to quaternary structure, component of the MIS12 complex composed of MIS12, DSN1, NSL1 and PMF1. Interacts with COPS7A. Interacts via its coiled-coil domain with the leucine-zipper domain of NFE2L2. The interaction with NFE2L2 is required for the transcriptional regulation of SSAT. As to expression, highest levels of expression in heart and skeletal muscle, with significant levels expressed in kidney and liver.

The protein resides in the nucleus. It is found in the chromosome. The protein localises to the centromere. It localises to the kinetochore. In terms of biological role, part of the MIS12 complex which is required for normal chromosome alignment and segregation and kinetochore formation during mitosis. May act as a cotranscription partner of NFE2L2 involved in regulation of polyamine-induced transcription of SSAT. The protein is Polyamine-modulated factor 1 of Homo sapiens (Human).